Here is a 441-residue protein sequence, read N- to C-terminus: Serine carboxypeptidase-like 2 (441 aa).

The N-terminal stretch at 1-29 (MANKYFSSVLKSLLLLLHLVFLSKQHVDS) is a signal peptide. Cystine bridges form between Cys88–Cys331, Cys252–Cys266, and Cys290–Cys297. Asn109 carries N-linked (GlcNAc...) asparagine glycosylation. Ser184 is a catalytic residue. Asn350 is a glycosylation site (N-linked (GlcNAc...) asparagine). Residue Asp366 is part of the active site. N-linked (GlcNAc...) asparagine glycosylation occurs at Asn382. His419 is an active-site residue.

The protein belongs to the peptidase S10 family. As to expression, expressed in seedlings and roots.

Its subcellular location is the secreted. Probable carboxypeptidase. In Arabidopsis thaliana (Mouse-ear cress), this protein is Serine carboxypeptidase-like 2 (SCPL2).